Reading from the N-terminus, the 206-residue chain is Platelet glycoprotein Ib beta chain (206 aa).

Residues 1–26 (MGSRPRGALSLLLLLLAPPSRPASGC) form the signal peptide. Intrachain disulfides connect Cys-26–Cys-32 and Cys-30–Cys-39. The LRRNT domain maps to 27–55 (PAPCRCSETRVDCGRRGLTWASLPAAFPP). Residues 27-150 (PAPCRCSETR…CAPGLLCWGA (124 aa)) lie on the Extracellular side of the membrane. The LRR repeat unit spans residues 60–83 (LVLTDNNLTALPPGLLDTLPALRR). Residues 89-143 (NPWRCDCRLLPLRAWLAGRPEREFYRDLRCVAPLALRGRLLPYVAEDELRAACAP) enclose the LRRCT domain. Intrachain disulfides connect Cys-93-Cys-118 and Cys-95-Cys-141. Residues 151–171 (LVAQLALLVLGLLHALLLALL) traverse the membrane as a helical segment. Residues 172 to 206 (LSRLRRLRAQARARSTREFSLTAPLVAESAGGGAS) lie on the Cytoplasmic side of the membrane. Ser-186 bears the Phosphoserine mark. Phosphoserine; by PKA is present on Ser-191. At Thr-193 the chain carries Phosphothreonine. Ser-200 is modified (phosphoserine).

In terms of assembly, two GP-Ib beta are disulfide-linked to one GP-Ib alpha. GP-IX is complexed with the GP-Ib heterodimer via a non covalent linkage. Interacts with TRAF4.

The protein localises to the membrane. In terms of biological role, gp-Ib, a surface membrane protein of platelets, participates in the formation of platelet plugs by binding to von Willebrand factor, which is already bound to the subendothelium. This chain is Platelet glycoprotein Ib beta chain (Gp1bb), found in Rattus norvegicus (Rat).